Reading from the N-terminus, the 389-residue chain is Alanine racemase (389 aa).

Lys-48 functions as the Proton acceptor; specific for D-alanine in the catalytic mechanism. Lys-48 is subject to N6-(pyridoxal phosphate)lysine. Arg-144 contacts substrate. Tyr-281 acts as the Proton acceptor; specific for L-alanine in catalysis. Met-329 is a substrate binding site.

This sequence belongs to the alanine racemase family. Pyridoxal 5'-phosphate is required as a cofactor.

It carries out the reaction L-alanine = D-alanine. The protein operates within amino-acid biosynthesis; D-alanine biosynthesis; D-alanine from L-alanine: step 1/1. Its function is as follows. Catalyzes the interconversion of L-alanine and D-alanine. May also act on other amino acids. The chain is Alanine racemase (alr) from Leptospira interrogans serogroup Icterohaemorrhagiae serovar Lai (strain 56601).